A 239-amino-acid polypeptide reads, in one-letter code: Acyl-protein thioesterase 1 (239 aa).

Residues Ser-124, Asp-180, and His-213 each act as charge relay system in the active site.

It belongs to the AB hydrolase superfamily. AB hydrolase 2 family.

It is found in the cytoplasm. The protein resides in the nucleus. The catalysed reaction is S-hexadecanoyl-L-cysteinyl-[protein] + H2O = L-cysteinyl-[protein] + hexadecanoate + H(+). In terms of biological role, hydrolyzes fatty acids from S-acylated cysteine residues in proteins with a strong preference for palmitoylated G-alpha proteins over other acyl substrates. Mediates the deacylation of G-alpha proteins such as GPA1 in vivo, but has weak or no activity toward palmitoylated Ras proteins. Has weak lysophospholipase activity in vitro; however such activity may not exist in vivo. This Emericella nidulans (strain FGSC A4 / ATCC 38163 / CBS 112.46 / NRRL 194 / M139) (Aspergillus nidulans) protein is Acyl-protein thioesterase 1.